Here is a 1117-residue protein sequence, read N- to C-terminus: RNA-directed RNA polymerase (1117 aa).

Polar residues predominate over residues 1–17 (MTVSGRSSWQNGKTTNA). The segment at 1-23 (MTVSGRSSWQNGKTTNAMRAGKL) is disordered.

The catalysed reaction is RNA(n) + a ribonucleoside 5'-triphosphate = RNA(n+1) + diphosphate. Functionally, RNA-dependent RNA polymerase which replicates the viral genome. This is RNA-directed RNA polymerase (p1) from Penicillium chrysogenum (Penicillium notatum).